Consider the following 501-residue polypeptide: Cytochrome P450 4d2 (501 aa).

Heme-binding residues include E311 and C449.

This sequence belongs to the cytochrome P450 family. It depends on heme as a cofactor.

The protein localises to the endoplasmic reticulum membrane. Its subcellular location is the microsome membrane. Involved in the metabolism of insect hormones and in the breakdown of synthetic insecticides. The sequence is that of Cytochrome P450 4d2 (Cyp4d2) from Drosophila melanogaster (Fruit fly).